The following is a 432-amino-acid chain: Adenylosuccinate synthetase (432 aa).

GTP is bound by residues 12–18 (GDEGKGK) and 40–42 (GHT). D13 acts as the Proton acceptor in catalysis. D13 and G40 together coordinate Mg(2+). Residues 13-16 (DEGK), 38-41 (NAGH), T130, R144, Q225, T240, and R304 each bind IMP. Catalysis depends on H41, which acts as the Proton donor. 300–306 (STTGRPR) lines the substrate pocket. GTP contacts are provided by residues R306, 332–334 (KLD), and 414–416 (SVG).

It belongs to the adenylosuccinate synthetase family. In terms of assembly, homodimer. Requires Mg(2+) as cofactor.

Its subcellular location is the cytoplasm. The enzyme catalyses IMP + L-aspartate + GTP = N(6)-(1,2-dicarboxyethyl)-AMP + GDP + phosphate + 2 H(+). It functions in the pathway purine metabolism; AMP biosynthesis via de novo pathway; AMP from IMP: step 1/2. Plays an important role in the de novo pathway of purine nucleotide biosynthesis. Catalyzes the first committed step in the biosynthesis of AMP from IMP. The sequence is that of Adenylosuccinate synthetase from Geobacter sp. (strain M21).